The primary structure comprises 110 residues: Ribonuclease P protein component 1 (110 aa).

Belongs to the eukaryotic/archaeal RNase P protein component 1 family. Consists of a catalytic RNA component and at least 4-5 protein subunits.

The protein resides in the cytoplasm. The enzyme catalyses Endonucleolytic cleavage of RNA, removing 5'-extranucleotides from tRNA precursor.. Its function is as follows. Part of ribonuclease P, a protein complex that generates mature tRNA molecules by cleaving their 5'-ends. The chain is Ribonuclease P protein component 1 from Methanosarcina acetivorans (strain ATCC 35395 / DSM 2834 / JCM 12185 / C2A).